The chain runs to 448 residues: Oxysterol-binding protein homolog 6 (448 aa).

The interval 1 to 42 (MGSKKLTVGSDSHRLSKSSFSSNKSSHSATKDQPIDTDDIDE) is disordered. Residue Ser16 is modified to Phosphoserine. The span at 17 to 28 (KSSFSSNKSSHS) shows a compositional bias: low complexity. The segment at 54–391 (IISQLRPGCD…PGEDLDYCIY (338 aa)) is OSBP-related domain (ORD). A 1,2-diacyl-sn-glycero-3-phospho-(1D-myo-inositol 4-phosphate) contacts are provided by residues 64–69 (LTRITL), 126–129 (KPLN), and 157–158 (HH). A 1,2-diacyl-sn-glycero-3-phospho-L-serine contacts are provided by residues 64–69 (LTRITL) and Asn129. An a 1,2-diacyl-sn-glycero-3-phospho-L-serine-binding site is contributed by Ser183. A 1,2-diacyl-sn-glycero-3-phospho-(1D-myo-inositol 4-phosphate)-binding residues include Lys351, Glu355, and Arg359.

The protein belongs to the OSBP family. In terms of assembly, interacts with the AAA ATPase VPS4; regulates OSH6 membrane association. VPS4 is required for membrane dissociation of OSH6.

The protein resides in the cytoplasm. The protein localises to the cell membrane. Its subcellular location is the endoplasmic reticulum membrane. The enzyme catalyses a 1,2-diacyl-sn-glycero-3-phospho-L-serine(in) = a 1,2-diacyl-sn-glycero-3-phospho-L-serine(out). In terms of biological role, lipid transport protein (LTP) involved in non-vesicular transfer of lipids between membranes. Functions in phosphoinositide-coupled directional transport of various lipids by carrying the lipid molecule in a hydrophobic pocket and transferring it between membranes through the cytosol. Involved in maintenance of intracellular sterol distribution and homeostasis. Catalyzes the lipid countertransport between the endoplasmic reticulum (ER) and the plasma membrane (PM). Specifically exchanges phosphatidylserine (PS) with phosphatidylinositol 4-phosphate (PI4P), delivering phosphatidylserine to the PM in exchange for PI4P, which is delivered to the ER-localized PI4P phosphatase SAC1 for degradation. Thus, by maintaining a PI4P gradient at the ER/PM interface, SAC1 drives PS transport. Binds phosphatidylserine and PI4P in a mutually exclusive manner. Also binds phosphatidic acid (PA). This Saccharomyces cerevisiae (strain ATCC 204508 / S288c) (Baker's yeast) protein is Oxysterol-binding protein homolog 6.